Reading from the N-terminus, the 87-residue chain is HssA/B-like protein 8 (87 aa).

Residues 1–22 (MSILSALTSISNPMKSTKSSVA) show a composition bias toward polar residues. The tract at residues 1 to 24 (MSILSALTSISNPMKSTKSSVANG) is disordered.

This sequence belongs to the hssA/B family.

This Dictyostelium discoideum (Social amoeba) protein is HssA/B-like protein 8 (hssl8).